Here is a 125-residue protein sequence, read N- to C-terminus: Glycine cleavage system H protein (125 aa).

Positions Ser-22 to Thr-104 constitute a Lipoyl-binding domain. N6-lipoyllysine is present on Lys-63.

It belongs to the GcvH family. In terms of assembly, the glycine cleavage system is composed of four proteins: P, T, L and H. The cofactor is (R)-lipoate.

Functionally, the glycine cleavage system catalyzes the degradation of glycine. The H protein shuttles the methylamine group of glycine from the P protein to the T protein. In terms of biological role, is also involved in protein lipoylation via its role as an octanoyl/lipoyl carrier protein intermediate. This Listeria welshimeri serovar 6b (strain ATCC 35897 / DSM 20650 / CCUG 15529 / CIP 8149 / NCTC 11857 / SLCC 5334 / V8) protein is Glycine cleavage system H protein.